The sequence spans 263 residues: Putative cysteine-rich repeat secretory protein 31 (263 aa).

The N-terminal stretch at 1–32 (MHNSYSLSKRLVLVLFLAVVATQLFLIRNVSS) is a signal peptide. 2 Gnk2-homologous domains span residues 39–141 (YLHH…AIEV) and 146–260 (YDNN…FYPF).

Belongs to the cysteine-rich repeat secretory protein family.

The protein localises to the secreted. The polypeptide is Putative cysteine-rich repeat secretory protein 31 (CRRSP31) (Arabidopsis thaliana (Mouse-ear cress)).